Consider the following 429-residue polypeptide: MKSSYNLRSIAAKVVGQVLDQGQSLSALLPIHQRDVSDKDRALLQELCFGVLRVLPQLEWCIQQLMAKPLTGKQRTLHYLIMVGIYQLHYTRIPPHAALAETVEGAVALKRPQLKGLINGVLRQFQRQQEELLQREATHSSHYLHPSWLLARIEHAYPNNWRGIVEANNQRPPMWLRVNRLHHTREAYLNLLMQGGIEAFPHTEYSDAIRLASPCAVDQLPGFSQGWATVQDASAQGCVYWLDPQDGEQILDLCAAPGGKTTHILEAAPKSHVLAVDVDETRLGRVKENLLRLQMHAEVKQGDGRYPDSWCEARVFDRILLDAPCSATGVIRRHPDIKWLRRDRDIEELVALQKEILDAIWPHLKTGGTMVYATCSILPQENTQQVTGFLSRHADAALVDTGTSEIPGIQILPHADSGDGFFYAKLVKN.

S-adenosyl-L-methionine is bound by residues 254–260 (CAAPGGK), aspartate 277, aspartate 303, and aspartate 322. The active-site Nucleophile is the cysteine 375.

It belongs to the class I-like SAM-binding methyltransferase superfamily. RsmB/NOP family.

It localises to the cytoplasm. The catalysed reaction is cytidine(967) in 16S rRNA + S-adenosyl-L-methionine = 5-methylcytidine(967) in 16S rRNA + S-adenosyl-L-homocysteine + H(+). Specifically methylates the cytosine at position 967 (m5C967) of 16S rRNA. The chain is Ribosomal RNA small subunit methyltransferase B from Pectobacterium atrosepticum (strain SCRI 1043 / ATCC BAA-672) (Erwinia carotovora subsp. atroseptica).